The chain runs to 169 residues: 2-C-methyl-D-erythritol 2,4-cyclodiphosphate synthase (169 aa).

A divalent metal cation-binding residues include Asp13 and His15. 4-CDP-2-C-methyl-D-erythritol 2-phosphate contacts are provided by residues 13-15 and 40-41; these read DIH and HS. An a divalent metal cation-binding site is contributed by His48. 4-CDP-2-C-methyl-D-erythritol 2-phosphate contacts are provided by residues 62–64, 138–141, and Arg148; these read DIG and TTNE.

Belongs to the IspF family. As to quaternary structure, homotrimer. A divalent metal cation serves as cofactor.

It catalyses the reaction 4-CDP-2-C-methyl-D-erythritol 2-phosphate = 2-C-methyl-D-erythritol 2,4-cyclic diphosphate + CMP. It functions in the pathway isoprenoid biosynthesis; isopentenyl diphosphate biosynthesis via DXP pathway; isopentenyl diphosphate from 1-deoxy-D-xylulose 5-phosphate: step 4/6. Its function is as follows. Involved in the biosynthesis of isopentenyl diphosphate (IPP) and dimethylallyl diphosphate (DMAPP), two major building blocks of isoprenoid compounds. Catalyzes the conversion of 4-diphosphocytidyl-2-C-methyl-D-erythritol 2-phosphate (CDP-ME2P) to 2-C-methyl-D-erythritol 2,4-cyclodiphosphate (ME-CPP) with a corresponding release of cytidine 5-monophosphate (CMP). In Akkermansia muciniphila (strain ATCC BAA-835 / DSM 22959 / JCM 33894 / BCRC 81048 / CCUG 64013 / CIP 107961 / Muc), this protein is 2-C-methyl-D-erythritol 2,4-cyclodiphosphate synthase.